An 826-amino-acid polypeptide reads, in one-letter code: Lon protease (826 aa).

The segment covering 1 to 20 (MSEEELNNRDTESKQEHDEN) has biased composition (basic and acidic residues). A disordered region spans residues 1 to 27 (MSEEELNNRDTESKQEHDENNSNFEAG). Residues 33 to 231 (LPVLPLREVI…KVHALLEKEL (199 aa)) enclose the Lon N-terminal domain. Position 384 to 391 (384 to 391 (GPPGVGKT)) interacts with ATP. Positions 620–801 (ENLVGMTTGL…SEALTFTLAE (182 aa)) constitute a Lon proteolytic domain. Catalysis depends on residues Ser707 and Lys750.

It belongs to the peptidase S16 family. As to quaternary structure, homohexamer. Organized in a ring with a central cavity.

The protein resides in the cytoplasm. The catalysed reaction is Hydrolysis of proteins in presence of ATP.. Its function is as follows. ATP-dependent serine protease that mediates the selective degradation of mutant and abnormal proteins as well as certain short-lived regulatory proteins. Required for cellular homeostasis and for survival from DNA damage and developmental changes induced by stress. Degrades polypeptides processively to yield small peptide fragments that are 5 to 10 amino acids long. Binds to DNA in a double-stranded, site-specific manner. The polypeptide is Lon protease (Neorickettsia sennetsu (strain ATCC VR-367 / Miyayama) (Ehrlichia sennetsu)).